The primary structure comprises 432 residues: Phosphomethylpyrimidine synthase (432 aa).

Residues Asn66, Met95, Tyr124, His163, 185–187 (SRG), 226–229 (DGLR), and Glu265 contribute to the substrate site. His269 is a binding site for Zn(2+). Tyr292 is a binding site for substrate. His333 serves as a coordination point for Zn(2+). Residues Cys409, Cys412, and Cys416 each coordinate [4Fe-4S] cluster.

The protein belongs to the ThiC family. [4Fe-4S] cluster serves as cofactor.

It carries out the reaction 5-amino-1-(5-phospho-beta-D-ribosyl)imidazole + S-adenosyl-L-methionine = 4-amino-2-methyl-5-(phosphooxymethyl)pyrimidine + CO + 5'-deoxyadenosine + formate + L-methionine + 3 H(+). It functions in the pathway cofactor biosynthesis; thiamine diphosphate biosynthesis. Its function is as follows. Catalyzes the synthesis of the hydroxymethylpyrimidine phosphate (HMP-P) moiety of thiamine from aminoimidazole ribotide (AIR) in a radical S-adenosyl-L-methionine (SAM)-dependent reaction. The sequence is that of Phosphomethylpyrimidine synthase from Thermoanaerobacter pseudethanolicus (strain ATCC 33223 / 39E) (Clostridium thermohydrosulfuricum).